The following is a 162-amino-acid chain: Small ribosomal subunit protein uS9 (162 aa).

This sequence belongs to the universal ribosomal protein uS9 family.

This chain is Small ribosomal subunit protein uS9, found in Methylobacterium nodulans (strain LMG 21967 / CNCM I-2342 / ORS 2060).